Reading from the N-terminus, the 106-residue chain is MYAVLVTGGKQYRVVQGETLRVEKLDVETGGDVTFNSVLLMGGSDGIHVGEALKDASVTAKVVAHGRARKVRIIKFRRRKHHMKHQGHRQYYTEIQITGISGPAKQ.

This sequence belongs to the bacterial ribosomal protein bL21 family. As to quaternary structure, part of the 50S ribosomal subunit. Contacts protein L20.

Functionally, this protein binds to 23S rRNA in the presence of protein L20. This Xylella fastidiosa (strain Temecula1 / ATCC 700964) protein is Large ribosomal subunit protein bL21.